A 364-amino-acid polypeptide reads, in one-letter code: Hsp70-binding protein 1 (364 aa).

Residues 1-75 are disordered; the sequence is MSDEGSRGSR…DPPPEPMSEE (75 aa). Over residues 23-42 the composition is skewed to gly residues; the sequence is SSGGGGGGGGGGSSSAGGSG. ARM repeat units lie at residues 137–179, 182–222, 225–264, and 267–306; these read ENMD…TCSQ, AAIQ…CLVR, EAGL…NLLV, and PEHR…SLVT. Phosphoserine occurs at positions 356 and 361.

Interacts with the ATP-binding domain of HSPA1A. Detected in a ternary complex containing STUB1, HSPA1A and HSPBP1. Interacts with PGLYRP1; this interaction blocks the cytotoxic activity of the PGLYRP1-HSPA1A complex.

Inhibits HSPA1A chaperone activity by changing the conformation of the ATP-binding domain of HSPA1A and interfering with ATP binding. Interferes with ubiquitination mediated by STUB1 and inhibits chaperone-assisted degradation of target proteins. This is Hsp70-binding protein 1 (HSPBP1) from Macaca fascicularis (Crab-eating macaque).